Reading from the N-terminus, the 237-residue chain is Concanavalin V (237 aa).

The Mn(2+) site is built by Glu8 and Asp10. Positions 10, 12, 14, and 19 each coordinate Ca(2+). Residue Asn14 coordinates a carbohydrate. Positions 19 and 24 each coordinate Mn(2+). A carbohydrate-binding positions include Gly70, 98 to 100 (GLY), Asp208, and Arg228.

It belongs to the leguminous lectin family. In terms of assembly, homotetramer. Post-translationally, concanavalin A-like lectins of the Diocleinae subtribe undergo proteolytic processing referred to as circular permutation. The propeptide is split into an N-terminal and a C-terminal part, the gamma and beta chain, respectively. These are then religated in beta-gamma order to form the mature alpha chain. The beta and gamma chains can often be detected in cell extracts. Residues 1-118 of the mature chain, as displayed here, probably constitute the beta chain in the propeptide, residues 119-237 the gamma chain.

In terms of biological role, D-mannose/D-glucose-binding lectin which binds alpha-methyl-D-mannoside, D-mannose and D-glucose in that order. Also binds to serum fetuin and ovalbumin. Has hemagglutinating activity towards rabbit erythrocytes. Is not toxic towards larvae of the brine shrimp Artemia. Induces relaxation in rat endothelized aorta. Shows a transient edematogenic effect in rat. This Canavalia cathartica (Jackbean) protein is Concanavalin V.